The primary structure comprises 335 residues: Peflin (335 aa).

Positions 23 to 37 (AMEETRREFEKEKQR) are enriched in basic and acidic residues. The segment at 23–92 (AMEETRREFE…SPRHTKTPVD (70 aa)) is disordered. Positions 43 to 53 (VTQAQTPNTRV) are enriched in polar residues. EF-hand domains lie at 144 to 192 (KVAP…DDNS), 198 to 223 (SVDA…IALY), 224 to 259 (KRVK…LGYL), 260 to 300 (IPFE…LMRL), and 301 to 332 (TKLF…LGRF). The Ca(2+) site is built by D170, R176, and E181. Ca(2+)-binding residues include D237, N239, S241, T243, and E248.

As to quaternary structure, homodimer.

The protein resides in the cytoplasm. It localises to the nucleus. The protein localises to the bud tip. It is found in the bud neck. Functionally, calcium-binding protein that is required for polar bud growth and cell wall abscission. Can also bind zinc ions. This chain is Peflin (PEF1), found in Saccharomyces cerevisiae (strain ATCC 204508 / S288c) (Baker's yeast).